Here is a 227-residue protein sequence, read N- to C-terminus: Cytidylate kinase (227 aa).

Gly10 to Thr18 lines the ATP pocket.

The protein belongs to the cytidylate kinase family. Type 1 subfamily.

It is found in the cytoplasm. The catalysed reaction is CMP + ATP = CDP + ADP. It carries out the reaction dCMP + ATP = dCDP + ADP. The sequence is that of Cytidylate kinase from Streptococcus agalactiae serotype III (strain NEM316).